We begin with the raw amino-acid sequence, 986 residues long: Bifunctional glutamine synthetase adenylyltransferase/adenylyl-removing enzyme (986 aa).

The segment at Met-1–Glu-482 is adenylyl removase. An adenylyl transferase region spans residues Ser-486–Gly-986.

The protein belongs to the GlnE family. The cofactor is Mg(2+).

The catalysed reaction is [glutamine synthetase]-O(4)-(5'-adenylyl)-L-tyrosine + phosphate = [glutamine synthetase]-L-tyrosine + ADP. The enzyme catalyses [glutamine synthetase]-L-tyrosine + ATP = [glutamine synthetase]-O(4)-(5'-adenylyl)-L-tyrosine + diphosphate. Functionally, involved in the regulation of glutamine synthetase GlnA, a key enzyme in the process to assimilate ammonia. When cellular nitrogen levels are high, the C-terminal adenylyl transferase (AT) inactivates GlnA by covalent transfer of an adenylyl group from ATP to specific tyrosine residue of GlnA, thus reducing its activity. Conversely, when nitrogen levels are low, the N-terminal adenylyl removase (AR) activates GlnA by removing the adenylyl group by phosphorolysis, increasing its activity. The regulatory region of GlnE binds the signal transduction protein PII (GlnB) which indicates the nitrogen status of the cell. This Caulobacter vibrioides (strain ATCC 19089 / CIP 103742 / CB 15) (Caulobacter crescentus) protein is Bifunctional glutamine synthetase adenylyltransferase/adenylyl-removing enzyme.